A 2555-amino-acid polypeptide reads, in one-letter code: Neurogenic locus notch homolog protein 1 (2555 aa).

The N-terminal stretch at 1–18 is a signal peptide; sequence MPPLLAPLLCLALLPALA. At 19–1735 the chain is on the extracellular side; the sequence is ARGPRCSQPG…VEPPPPAQLH (1717 aa). EGF-like domains are found at residues 20-58, 59-99, 102-139, and 140-176; these read RGPR…PRCQ, DPNP…PLCL, LDNA…KSCQ, and QADP…PTCR. Disulfide bonds link C24/C37, C31/C46, C48/C57, C63/C74, C68/C87, C89/C98, C106/C117, C111/C127, C129/C138, C144/C155, C149/C164, C166/C175, C182/C195, C189/C204, C206/C215, C222/C233, C227/C243, C245/C254, C261/C272, C266/C281, C283/C292, C299/C312, C306/C321, C323/C332, C339/C350, C344/C359, C361/C370, C376/C387, C381/C398, C400/C409, C416/C429, C423/C438, and C440/C449. Residue N41 is glycosylated (N-linked (GlcNAc...) asparagine). O-linked (Glc...) serine glycosylation is present at S65. T73 is a glycosylation site (O-linked (Fuc...) threonine). O-linked (Fuc...) threonine glycosylation is present at T116. The O-linked (Glc...) serine glycan is linked to S146. Residues 178 to 216 form the EGF-like 5; calcium-binding domain; the sequence is DVNECGQKPGLCRHGGTCHNEVGSYRCVCRATHTGPNCE. T194 carries an O-linked (Fuc...) threonine glycan. Residues 218 to 255 enclose the EGF-like 6 domain; sequence PYVPCSPSPCQNGGTCRPTGDVTHECACLPGFTGQNCE. A glycan (O-linked (Fuc...) threonine; alternate) is linked at T232. An O-linked (GalNAc...) threonine; alternate glycan is attached at T232. The region spanning 257–293 is the EGF-like 7; calcium-binding domain; the sequence is NIDDCPGNNCKNGGACVDGVNTYNCRCPPEWTGQYCT. The EGF-like 8; calcium-binding domain maps to 295 to 333; that stretch reads DVDECQLMPNACQNGGTCHNTHGGYNCVCVNGWTGEDCS. T311 carries O-linked (Fuc...) threonine glycosylation. In terms of domain architecture, EGF-like 9; calcium-binding spans 335-371; that stretch reads NIDDCASAACFHGATCHDRVASFYCECPHGRTGLLCH. The O-linked (Glc...) serine glycan is linked to S341. O-linked (Fuc...) threonine glycosylation is present at T349. The EGF-like 10 domain occupies 372–410; sequence LNDACISNPCNEGSNCDTNPVNGKAICTCPSGYTGPACS. A glycan (O-linked (Glc...) serine) is linked at S378. An EGF-like 11; calcium-binding domain is found at 412–450; that stretch reads DVDECSLGANPCEHAGKCINTLGSFECQCLQGYTGPRCE. Residues 420-421 form an interaction with DLL4 region; the sequence is AN. Ca(2+) is bound by residues T432 and S435. S435 carries an O-linked (Glc...) serine glycan. The segment at 448 to 452 is interaction with DLL4; that stretch reads RCEID. The Ca(2+) site is built by D452, V453, and E455. The region spanning 452 to 488 is the EGF-like 12; calcium-binding domain; it reads DVNECVSNPCQNDATCLDQIGEFQCICMPGYEGVHCE. Disulfide bonds link C456-C467, C461-C476, and C478-C487. Residue S458 is glycosylated (O-linked (Glc...) serine). Residue T466 is glycosylated (O-linked (Fuc...) threonine). Ca(2+) contacts are provided by D469 and Q470. Positions 490, 491, and 493 each coordinate Ca(2+). Positions 490-526 constitute an EGF-like 13; calcium-binding domain; it reads NTDECASSPCLHNGRCLDKINEFQCECPTGFTGHLCQ. 74 disulfide bridges follow: C494–C505, C499–C514, C516–C525, C532–C543, C537–C552, C554–C563, C570–C580, C575–C589, C591–C600, C607–C618, C612–C627, C629–C638, C645–C655, C650–C664, C666–C675, C682–C693, C687–C702, C704–C713, C720–C730, C725–C739, C741–C750, C757–C768, C762–C777, C779–C788, C795–C806, C800–C815, C817–C826, C833–C844, C838–C855, C857–C866, C873–C884, C878–C893, C895–C904, C911–C922, C916–C931, C933–C942, C949–C960, C954–C969, C971–C980, C987–C998, C992–C1007, C1009–C1018, C1025–C1036, C1030–C1045, C1047–C1056, C1063–C1074, C1068–C1083, C1085–C1094, C1101–C1122, C1116–C1131, C1133–C1142, C1149–C1160, C1154–C1169, C1171–C1180, C1187–C1198, C1192–C1207, C1209–C1218, C1238–C1253, C1255–C1264, C1271–C1284, C1276–C1293, C1295–C1304, C1311–C1322, C1316–C1334, C1336–C1345, C1352–C1363, C1357–C1372, C1374–C1383, C1391–C1403, C1397–C1414, C1416–C1425, C1449–C1472, C1454–C1467, and C1463–C1479. S496 carries O-linked (Glc...) serine glycosylation. 2 residues coordinate Ca(2+): D507 and K508. One can recognise an EGF-like 14; calcium-binding domain in the interval 528–564; it reads DVDECASTPCKNGAKCLDGPNTYTCVCTEGYTGTHCE. S534 carries an O-linked (Glc...) serine glycan. Residues 566-601 enclose the EGF-like 15; calcium-binding domain; sequence DIDECDPDPCHYGSCKDGVATFTCLCRPGYTGHHCE. Residues 603–639 form the EGF-like 16; calcium-binding domain; sequence NINECSSQPCRHGGTCQDRDNAYLCFCLKGTTGPNCE. An O-linked (Glc...) serine glycan is attached at S609. O-linked (Fuc...) threonine glycosylation occurs at T617. In terms of domain architecture, EGF-like 17; calcium-binding spans 641–676; that stretch reads NLDDCASSPCDSGTCLDKIDGYECACEPGYTGSMCN. An O-linked (Glc...) serine glycan is attached at S647. The EGF-like 18; calcium-binding domain occupies 678–714; the sequence is NIDECAGNPCHNGGTCEDGINGFTCRCPEGYHDPTCL. An O-linked (Fuc...) threonine glycan is attached at T692. In terms of domain architecture, EGF-like 19; calcium-binding spans 716–751; it reads EVNECNSNPCVHGACRDSLNGYKCDCDPGWSGTNCD. S722 is a glycosylation site (O-linked (Glc...) serine). In terms of domain architecture, EGF-like 20 spans 753–789; the sequence is NNNECESNPCVNGGTCKDMTSGYVCTCREGFSGPNCQ. Residue S759 is glycosylated (O-linked (Glc...) serine). O-linked (Fuc...) threonine glycosylation is present at T767. O-linked (GlcNAc) serine glycosylation occurs at S784. One can recognise an EGF-like 21; calcium-binding domain in the interval 791–827; sequence NINECASNPCLNQGTCIDDVAGYKCNCLLPYTGATCE. Residue S797 is glycosylated (O-linked (Glc...) serine). A glycan (O-linked (Fuc...) threonine) is linked at T805. One can recognise an EGF-like 22 domain in the interval 829–867; the sequence is VLAPCAPSPCRNGGECRQSEDYESFSCVCPTGWQGQTCE. Residues 869 to 905 form the EGF-like 23; calcium-binding domain; that stretch reads DINECVLSPCRHGASCQNTHGGYRCHCQAGYSGRNCE. The EGF-like 24 domain maps to 907 to 943; that stretch reads DIDDCRPNPCHNGGSCTDGINTAFCDCLPGFRGTFCE. S921 carries an O-linked (Fuc) serine glycan. An EGF-like 25; calcium-binding domain is found at 945 to 981; sequence DINECASDPCRNGANCTDCVDSYTCTCPAGFSGIHCE. S951 is a glycosylation site (O-linked (Glc...) serine). The N-linked (GlcNAc...) asparagine glycan is linked to N959. EGF-like domains follow at residues 983–1019, 1021–1057, 1059–1095, 1097–1143, and 1145–1181; these read NTPD…SYCQ, DVNE…PNCQ, LVHW…LYCD, PSVS…SYCE, and LVDE…VNCS. T997 is a glycosylation site (O-linked (Fuc...) threonine). Residue S1027 is glycosylated (O-linked (Glc...) serine). T1035 carries an O-linked (Fuc...) threonine glycan. A glycan (O-linked (Glc...) serine) is linked at S1065. O-linked (Fuc...) threonine glycosylation is present at T1159. An N-linked (GlcNAc...) asparagine glycan is attached at N1179. Residues 1183 to 1219 form the EGF-like 31; calcium-binding domain; the sequence is EIDECLSHPCQNGGTCLDLPNTYKCSCPRGTQGVHCE. An O-linked (Glc...) serine glycan is attached at S1189. A glycan (O-linked (Fuc...) threonine) is linked at T1197. Residues 1221-1265 form the EGF-like 32; calcium-binding domain; it reads NVDDCNPPVDPVSRSPKCFNNGTCVDQVGGYSCTCPPGFVGERCE. An N-linked (GlcNAc...) asparagine glycan is attached at N1241. EGF-like domains follow at residues 1267-1305, 1307-1346, 1348-1384, and 1387-1426; these read DVNE…RRCE, VING…ATCE, DART…PECQ, and ASSP…LLCH. Residue S1273 is glycosylated (O-linked (Glc...) serine). Residue T1362 is glycosylated (O-linked (Fuc...) threonine). T1379 carries an O-linked (GlcNAc...) threonine glycan. Residue T1402 is glycosylated (O-linked (Fuc...) threonine; alternate). O-linked (GalNAc...) threonine; alternate glycosylation is present at T1402. 3 LNR repeats span residues 1449–1489, 1490–1531, and 1532–1571; these read CELP…PWKN, CTQS…CNPL, and YDQY…RLAA. Positions 1457, 1460, 1475, and 1478 each coordinate Ca(2+). Residue N1489 is glycosylated (N-linked (GlcNAc...) asparagine). Disulfide bonds link C1490–C1514, C1496–C1509, C1505–C1521, C1536–C1549, and C1545–C1561. N-linked (GlcNAc...) asparagine glycosylation is present at N1587. O-linked (GalNAc...) threonine glycosylation is present at T1725. Positions 1728-1760 are interaction with PSEN1; it reads PPPPAQLHFMYVAAAAFVLLFFVGCGVLLSRKR. Residues 1736–1756 form a helical membrane-spanning segment; it reads FMYVAAAAFVLLFFVGCGVLL. The Cytoplasmic segment spans residues 1757 to 2555; that stretch reads SRKRRRQHGQ…QIARIPEAFK (799 aa). K1759 is covalently cross-linked (Glycyl lysine isopeptide (Lys-Gly) (interchain with G-Cter in ubiquitin)). Positions 1780–1808 are disordered; sequence KKKRREPLGEDSVGLKPLKNASDGALMDD. T1861 is modified (phosphothreonine). ANK repeat units lie at residues 1927–1956, 1960–1990, 1994–2023, 2027–2056, 2060–2089, and 2095–2122; these read TGET…DANI, MGRT…DLDA, DGTT…DVNA, LGKS…NKDM, REET…NRDI, and RLPR…VRSP. An HIF1AN-binding region spans residues 1947 to 1955; the sequence is LLEASADAN. N1955 is modified ((3S)-3-hydroxyasparagine; by HIF1AN; partial). Residues 2014–2022 are HIF1AN-binding; the sequence is LINSHADVN. N2022 is subject to (3S)-3-hydroxyasparagine; by HIF1AN. Disordered regions lie at residues 2151-2194, 2379-2447, and 2483-2555; these read PGVQ…LDSS, LVQT…QPLG, and TPPS…EAFK. The segment covering 2379–2408 has biased composition (low complexity); it reads LVQTQQVQPQNLQMQQQNLQPANIQQQQSL. The segment covering 2483-2502 has biased composition (polar residues); sequence TPPSQHSYSSPVDNTPSHQL. The segment covering 2512 to 2527 has biased composition (low complexity); the sequence is PSPESPDQWSSSSPHS. Residues 2528–2547 show a composition bias toward polar residues; it reads NVSDWSEGVSSPPTSMQSQI.

This sequence belongs to the NOTCH family. As to quaternary structure, heterodimer of a C-terminal fragment N(TM) and an N-terminal fragment N(EC) which are probably linked by disulfide bonds. Interacts with DNER, DTX1, DTX2 and RBPJ/RBPSUH. Also interacts with MAML1, MAML2 and MAML3 which act as transcriptional coactivators for NOTCH1. The NOTCH1 intracellular domain interacts with SNW1; the interaction involves multimerized NOTCH1 NICD and is implicated in a formation of an intermediate preactivation complex which associates with DNA-bound CBF-1/RBPJ. The activated membrane-bound form interacts with AAK1 which promotes NOTCH1 stabilization. Forms a trimeric complex with FBXW7 and SGK1. Interacts with HIF1AN. HIF1AN negatively regulates the function of notch intracellular domain (NICD), accelerating myogenic differentiation. Interacts (via NICD) with SNAI1 (via zinc fingers); the interaction induces SNAI1 degradation via MDM2-mediated ubiquitination and inhibits SNAI1-induced cell invasion. Interacts (via NICD) with MDM2A. Interacts (via NICD) with BCL6; the interaction decreases MAML1 recruitment by NOTCH1 NICD on target genes DNA and inhibits NOTCH1 transactivation activity. Interacts with THBS4. Interacts (via the EGF-like repeat region) with CCN3 (via CTCK domain). Interacts (via EGF-like domains) with DLL4 (via N-terminal DSL and MNNL domains). Interacts with ZMIZ1. Interacts (via NICD domain) with MEGF10 (via the cytoplasmic domain). Interacts with DLL1 and JAG1. Interacts (via NICD domain) with PRAG1. Forms a complex with PRAG1, N1ICD and MAML1, in a MAML1-dependent manner. Interacts (via transmembrane region) with PSEN1; the interaction is direct. Interacts with ZFP64. Synthesized in the endoplasmic reticulum as an inactive form which is proteolytically cleaved by a furin-like convertase in the trans-Golgi network before it reaches the plasma membrane to yield an active, ligand-accessible form. Cleavage results in a C-terminal fragment N(TM) and a N-terminal fragment N(EC). Following ligand binding, it is cleaved by ADAM17 to yield a membrane-associated intermediate fragment called notch extracellular truncation (NEXT). Following endocytosis, this fragment is then cleaved by one of the catalytic subunits of gamma-secretase (PSEN1 or PSEN2), to release a Notch-derived peptide containing the intracellular domain (NICD) from the membrane. In terms of processing, phosphorylated. Post-translationally, O-glycosylated on the EGF-like domains. O-glucosylated at Ser-435 by KDELC1 and KDELC2. Contains both O-linked fucose and O-linked glucose in the EGF-like domains 11, 12 and 13, which are interacting with the residues on DLL4. O-linked glycosylation by GALNT11 is involved in determination of left/right symmetry: glycosylation promotes activation of NOTCH1, possibly by promoting cleavage by ADAM17, modulating the balance between motile and immotile (sensory) cilia at the left-right organiser (LRO). MFNG-, RFNG- and LFNG-mediated modification of O-fucose residues at specific EGF-like domains results in inhibition of its activation by JAG1 and enhancement of its activation by DLL1 via an increased binding to DLL1. Ubiquitinated. Undergoes 'Lys-29'-linked polyubiquitination by ITCH; promotes the lysosomal degradation of non-activated internalized NOTCH1. Deubiquitination by USP12 is required for transport of internalized non-activated receptor from late endosomes to lysosomes for degradation. Monoubiquitination at Lys-1759 is required for activation by gamma-secretase cleavage, it promotes interaction with AAK1, which stabilizes it. Deubiquitination by EIF3F is necessary for nuclear import of activated Notch. In terms of processing, hydroxylated at Asn-1955 by HIF1AN. Hydroxylated at Asn-2022 by HIF1AN. Hydroxylation reduces affinity for HI1AN and may thus indirectly modulate negative regulation of NICD. As to expression, in fetal tissues most abundant in spleen, brain stem and lung. Also present in most adult tissues where it is found mainly in lymphoid tissues.

Its subcellular location is the cell membrane. It is found in the late endosome membrane. It localises to the nucleus. Its function is as follows. Functions as a receptor for membrane-bound ligands Jagged-1 (JAG1), Jagged-2 (JAG2) and Delta-1 (DLL1) to regulate cell-fate determination. Upon ligand activation through the released notch intracellular domain (NICD) it forms a transcriptional activator complex with RBPJ/RBPSUH and activates genes of the enhancer of split locus. Affects the implementation of differentiation, proliferation and apoptotic programs. Involved in angiogenesis; negatively regulates endothelial cell proliferation and migration and angiogenic sprouting. Involved in the maturation of both CD4(+) and CD8(+) cells in the thymus. Important for follicular differentiation and possibly cell fate selection within the follicle. During cerebellar development, functions as a receptor for neuronal DNER and is involved in the differentiation of Bergmann glia. Represses neuronal and myogenic differentiation. May play an essential role in postimplantation development, probably in some aspect of cell specification and/or differentiation. May be involved in mesoderm development, somite formation and neurogenesis. May enhance HIF1A function by sequestering HIF1AN away from HIF1A. Required for the THBS4 function in regulating protective astrogenesis from the subventricular zone (SVZ) niche after injury. Involved in determination of left/right symmetry by modulating the balance between motile and immotile (sensory) cilia at the left-right organiser (LRO). This is Neurogenic locus notch homolog protein 1 (NOTCH1) from Homo sapiens (Human).